The primary structure comprises 236 residues: tRNA (guanine-N(1)-)-methyltransferase (236 aa).

Residues G113 and 133–138 (IGDYVL) each bind S-adenosyl-L-methionine.

Belongs to the RNA methyltransferase TrmD family. Homodimer.

The protein localises to the cytoplasm. It carries out the reaction guanosine(37) in tRNA + S-adenosyl-L-methionine = N(1)-methylguanosine(37) in tRNA + S-adenosyl-L-homocysteine + H(+). Its function is as follows. Specifically methylates guanosine-37 in various tRNAs. The protein is tRNA (guanine-N(1)-)-methyltransferase of Lachnospira eligens (strain ATCC 27750 / DSM 3376 / VPI C15-48 / C15-B4) (Eubacterium eligens).